A 110-amino-acid chain; its full sequence is UPF0251 protein PYRAB12660 (110 aa).

It belongs to the UPF0251 family.

The chain is UPF0251 protein PYRAB12660 from Pyrococcus abyssi (strain GE5 / Orsay).